A 539-amino-acid chain; its full sequence is Acid-sensing ion channel 4-A (539 aa).

At 1–68 the chain is on the cytoplasmic side; that stretch reads MPIEFVCKIK…SGRLGVRQTL (68 aa). The chain crosses the membrane as a helical span at residues 69–89; that stretch reads WALAFLVSLALFLYQAAKCAI. The Extracellular segment spans residues 90–432; sequence SYLEHPHVTA…EQKKAYDVAG (343 aa). Disulfide bonds link cysteine 116–cysteine 200 and cysteine 178–cysteine 185. Asparagine 136, asparagine 165, asparagine 179, asparagine 184, asparagine 206, and asparagine 241 each carry an N-linked (GlcNAc...) asparagine glycan. 5 disulfides stabilise this stretch: cysteine 294–cysteine 369, cysteine 313–cysteine 365, cysteine 317–cysteine 363, cysteine 326–cysteine 347, and cysteine 328–cysteine 340. Residue asparagine 370 is glycosylated (N-linked (GlcNAc...) asparagine). Residues 433-453 form a helical membrane-spanning segment; that stretch reads LLGDIGGQMGLFIGASVLTIL. A GAS motif; ion selectivity filter motif is present at residues 446–448; sequence GAS. Residues 454 to 539 are Cytoplasmic-facing; sequence EILDYVYEVI…HHRVSEDFAC (86 aa). The segment at 474–494 is disordered; it reads QRDDKKQTQQQQQASTVATVN.

The protein belongs to the amiloride-sensitive sodium channel (TC 1.A.6) family. ASIC4 subfamily. As to quaternary structure, homotrimer. Heterotrimer; with other ASIC proteins producing functional channels. Expressed in central nervous system.

The protein localises to the cell membrane. It catalyses the reaction Na(+)(in) = Na(+)(out). Inhibited by the diuretic drug amiloride. In terms of biological role, could form pH-gated trimeric sodium channels and function as a postsynaptic excitatory receptors in the nervous system. This is Acid-sensing ion channel 4-A from Danio rerio (Zebrafish).